We begin with the raw amino-acid sequence, 599 residues long: Elongation factor 4 (599 aa).

Residues 5 to 187 enclose the tr-type G domain; the sequence is SHIRNFSIIA…RLVTAIPAPE (183 aa). Residues 17–22 and 134–137 contribute to the GTP site; these read DHGKST and NKMD.

The protein belongs to the TRAFAC class translation factor GTPase superfamily. Classic translation factor GTPase family. LepA subfamily.

Its subcellular location is the cell inner membrane. It carries out the reaction GTP + H2O = GDP + phosphate + H(+). In terms of biological role, required for accurate and efficient protein synthesis under certain stress conditions. May act as a fidelity factor of the translation reaction, by catalyzing a one-codon backward translocation of tRNAs on improperly translocated ribosomes. Back-translocation proceeds from a post-translocation (POST) complex to a pre-translocation (PRE) complex, thus giving elongation factor G a second chance to translocate the tRNAs correctly. Binds to ribosomes in a GTP-dependent manner. The polypeptide is Elongation factor 4 (Pseudomonas aeruginosa (strain LESB58)).